The following is a 296-amino-acid chain: MKIAVLLGGISRERPISLKSGENVLKALKKLGHDVVPIDVDENFLEIAPKLKEFEVVFNALHGHFGEDGTVQAILDWVGVSYTGSKVLASAICFDKVMTYRVLDGYVNFPEYTIVKKPVKESPYGFPCVIKPRKEGSSIGVHICDNSNQLYNDLSEELKKYNEMMIQRYIEGRELTVSILEIGKPQILPVLELKPKRRFYDYTAKYVSGMTEFILPAPLSVEEYQKVANSSLRAFELCGCEGFARVDGILKDNVFYVLELNTIPGLTDLSDMPASAKAAGMSFEELVDAIIQTAVR.

Residues 99 to 292 (TYRVLDGYVN…FEELVDAIIQ (194 aa)) enclose the ATP-grasp domain. 125–176 (GFPCVIKPRKEGSSIGVHICDNSNQLYNDLSEELKKYNEMMIQRYIEGRELT) serves as a coordination point for ATP. 3 residues coordinate Mg(2+): aspartate 247, glutamate 259, and asparagine 261.

It belongs to the D-alanine--D-alanine ligase family. Requires Mg(2+) as cofactor. Mn(2+) serves as cofactor.

It localises to the cytoplasm. It carries out the reaction 2 D-alanine + ATP = D-alanyl-D-alanine + ADP + phosphate + H(+). It participates in cell wall biogenesis; peptidoglycan biosynthesis. Functionally, cell wall formation. This Pseudothermotoga lettingae (strain ATCC BAA-301 / DSM 14385 / NBRC 107922 / TMO) (Thermotoga lettingae) protein is D-alanine--D-alanine ligase.